The chain runs to 134 residues: Translation initiation factor 2 subunit beta (134 aa).

This sequence belongs to the eIF-2-beta/eIF-5 family. Heterotrimer composed of an alpha, a beta and a gamma chain.

EIF-2 functions in the early steps of protein synthesis by forming a ternary complex with GTP and initiator tRNA. The polypeptide is Translation initiation factor 2 subunit beta (Pyrobaculum calidifontis (strain DSM 21063 / JCM 11548 / VA1)).